The primary structure comprises 300 residues: Sulfate adenylyltransferase subunit 2 (300 aa).

Residues 281–300 (RAIDRDEAGSMEKKKREGYF) form a disordered region.

The protein belongs to the PAPS reductase family. CysD subfamily. Heterodimer composed of CysD, the smaller subunit, and CysN.

The enzyme catalyses sulfate + ATP + H(+) = adenosine 5'-phosphosulfate + diphosphate. The protein operates within sulfur metabolism; hydrogen sulfide biosynthesis; sulfite from sulfate: step 1/3. Its function is as follows. With CysN forms the ATP sulfurylase (ATPS) that catalyzes the adenylation of sulfate producing adenosine 5'-phosphosulfate (APS) and diphosphate, the first enzymatic step in sulfur assimilation pathway. APS synthesis involves the formation of a high-energy phosphoric-sulfuric acid anhydride bond driven by GTP hydrolysis by CysN coupled to ATP hydrolysis by CysD. The protein is Sulfate adenylyltransferase subunit 2 of Brucella abortus (strain 2308).